Here is a 156-residue protein sequence, read N- to C-terminus: MYCPFCQHGHSRVIDSRVIEAGSAIRRRRECSQCQGRFTTIEKAVLLVLKRNGVTEPFSREKVVTGVRRACQGRDVSDDSLKRLAQQVEETVRSSGSSQVRANDIGLAILDPLRELDEVAYLRFASVYKSFESADDFEKEIRLMRRQSREKQVQQG.

A zinc finger spans residues Cys3 to Cys34. In terms of domain architecture, ATP-cone spans Leu46–Asp136.

Belongs to the NrdR family. Zn(2+) serves as cofactor.

In terms of biological role, negatively regulates transcription of bacterial ribonucleotide reductase nrd genes and operons by binding to NrdR-boxes. The polypeptide is Transcriptional repressor NrdR (Corynebacterium efficiens (strain DSM 44549 / YS-314 / AJ 12310 / JCM 11189 / NBRC 100395)).